The chain runs to 941 residues: Isoleucine--tRNA ligase (941 aa).

The 'HIGH' region signature appears at 59-69 (PYANGNIHIGH). Glu562 contributes to the L-isoleucyl-5'-AMP binding site. The 'KMSKS' region signature appears at 603–607 (KMSKS). ATP is bound at residue Lys606. Residues Cys904, Cys907, Cys924, and Cys927 each contribute to the Zn(2+) site.

This sequence belongs to the class-I aminoacyl-tRNA synthetase family. IleS type 1 subfamily. In terms of assembly, monomer. It depends on Zn(2+) as a cofactor.

The protein localises to the cytoplasm. It carries out the reaction tRNA(Ile) + L-isoleucine + ATP = L-isoleucyl-tRNA(Ile) + AMP + diphosphate. Functionally, catalyzes the attachment of isoleucine to tRNA(Ile). As IleRS can inadvertently accommodate and process structurally similar amino acids such as valine, to avoid such errors it has two additional distinct tRNA(Ile)-dependent editing activities. One activity is designated as 'pretransfer' editing and involves the hydrolysis of activated Val-AMP. The other activity is designated 'posttransfer' editing and involves deacylation of mischarged Val-tRNA(Ile). The chain is Isoleucine--tRNA ligase from Haemophilus influenzae (strain PittEE).